Here is a 535-residue protein sequence, read N- to C-terminus: Methylmalonate-semialdehyde/malonate-semialdehyde dehydrogenase [acylating], mitochondrial (535 aa).

The N-terminal 32 residues, 1–32 (MAAAVAAAAAMRSRILQVSSKVNATWYPASSF), are a transit peptide targeting the mitochondrion. N6-acetyllysine; alternate occurs at positions 47, 52, 55, and 76. Residues Lys47, Lys52, Lys55, and Lys76 each carry the N6-succinyllysine; alternate modification. Lys87 is subject to N6-acetyllysine. 2 positions are modified to N6-acetyllysine; alternate: Lys117 and Lys129. An N6-succinyllysine; alternate mark is found at Lys117 and Lys129. NAD(+) contacts are provided by Ala183, Phe185, Lys209, Glu212, Arg213, and Ser262. A Phosphoserine modification is found at Ser262. Residue Lys298 is modified to N6-acetyllysine. Cys317 serves as the catalytic Nucleophile. N6-acetyllysine is present on residues Lys330 and Lys331. Lys364 and Lys376 each carry N6-acetyllysine; alternate. N6-succinyllysine; alternate occurs at positions 364 and 376. At Ser380 the chain carries Phosphoserine. The residue at position 391 (Lys391) is an N6-succinyllysine. An NAD(+)-binding site is contributed by Glu417. Lys500 bears the N6-acetyllysine mark. Lys517 carries the N6-succinyllysine modification.

Belongs to the aldehyde dehydrogenase family. As to quaternary structure, homotetramer. In terms of processing, acetylation of Lys-55; Lys-117 and Lys-331 is observed in liver mitochondria from fasted mice but not from fed mice.

The protein localises to the mitochondrion. The catalysed reaction is 3-oxopropanoate + NAD(+) + CoA + H2O = hydrogencarbonate + acetyl-CoA + NADH + H(+). The enzyme catalyses 2-methyl-3-oxopropanoate + NAD(+) + CoA + H2O = propanoyl-CoA + hydrogencarbonate + NADH + H(+). It catalyses the reaction (R)-2-methyl-3-oxopropanoate + NAD(+) + CoA + H2O = propanoyl-CoA + hydrogencarbonate + NADH + H(+). It carries out the reaction (S)-2-methyl-3-oxopropanoate + NAD(+) + CoA + H2O = propanoyl-CoA + hydrogencarbonate + NADH + H(+). Functionally, malonate and methylmalonate semialdehyde dehydrogenase involved in the catabolism of valine, thymine, and compounds catabolized by way of beta-alanine, including uracil and cytidine. The sequence is that of Methylmalonate-semialdehyde/malonate-semialdehyde dehydrogenase [acylating], mitochondrial from Mus musculus (Mouse).